A 165-amino-acid polypeptide reads, in one-letter code: MKSILRSTTRNLITSSRRFENLKTTEEIRNFLAESTWSINELLKSPTGSSQPEVSPEIVKKMLKLSGLNDLKDDQSVTKALNLQMMFINHLYDNDHETVTPSPKRNENNGIFRLLASDHLPQRPLELNNLLKQINELKPDPSKGEVDFTISDLQRDSFVINKRKE.

Residues 1 to 19 (MKSILRSTTRNLITSSRRF) constitute a mitochondrion transit peptide.

The protein belongs to the GatF family. In terms of assembly, subunit of the heterotrimeric GatFAB amidotransferase (AdT) complex, composed of A, B and F subunits.

The protein resides in the mitochondrion inner membrane. The enzyme catalyses L-glutamyl-tRNA(Gln) + L-glutamine + ATP + H2O = L-glutaminyl-tRNA(Gln) + L-glutamate + ADP + phosphate + H(+). Functionally, allows the formation of correctly charged Gln-tRNA(Gln) through the transamidation of misacylated Glu-tRNA(Gln) in the mitochondria. The reaction takes place in the presence of glutamine and ATP through an activated gamma-phospho-Glu-tRNA(Gln). Required for proper protein synthesis within the mitochondrion. This chain is Glutamyl-tRNA(Gln) amidotransferase subunit F, mitochondrial, found in Candida albicans (strain SC5314 / ATCC MYA-2876) (Yeast).